The chain runs to 308 residues: Protein FdhE homolog (308 aa).

The protein belongs to the FdhE family.

It is found in the cytoplasm. Necessary for formate dehydrogenase activity. In Edwardsiella ictaluri (strain 93-146), this protein is Protein FdhE homolog.